The chain runs to 138 residues: Small ribosomal subunit protein uS9 (138 aa).

The segment covering 100-118 has biased composition (basic and acidic residues); the sequence is PENRPPLKTEGYLTRDPRA. The interval 100-138 is disordered; it reads PENRPPLKTEGYLTRDPRAKERKKYGLHKARKAPQYSKR. Basic residues predominate over residues 119–138; it reads KERKKYGLHKARKAPQYSKR.

Belongs to the universal ribosomal protein uS9 family.

The chain is Small ribosomal subunit protein uS9 from Trichormus variabilis (strain ATCC 29413 / PCC 7937) (Anabaena variabilis).